The sequence spans 467 residues: DNA polymerase IV (467 aa).

A UmuC domain is found at 5–187 (VLHIDMDAFF…LPVGALWGVG (183 aa)). Residues D9 and D104 each coordinate Mg(2+). The active site involves E105. Disordered stretches follow at residues 364-383 (PDTD…STQV) and 429-449 (KGRT…DPLD).

The protein belongs to the DNA polymerase type-Y family. As to quaternary structure, monomer. The cofactor is Mg(2+).

It is found in the cytoplasm. It carries out the reaction DNA(n) + a 2'-deoxyribonucleoside 5'-triphosphate = DNA(n+1) + diphosphate. In terms of biological role, poorly processive, error-prone DNA polymerase involved in untargeted mutagenesis. Copies undamaged DNA at stalled replication forks, which arise in vivo from mismatched or misaligned primer ends. These misaligned primers can be extended by PolIV. Exhibits no 3'-5' exonuclease (proofreading) activity. May be involved in translesional synthesis, in conjunction with the beta clamp from PolIII. The sequence is that of DNA polymerase IV from Corynebacterium glutamicum (strain ATCC 13032 / DSM 20300 / JCM 1318 / BCRC 11384 / CCUG 27702 / LMG 3730 / NBRC 12168 / NCIMB 10025 / NRRL B-2784 / 534).